Here is a 118-residue protein sequence, read N- to C-terminus: Holo-[acyl-carrier-protein] synthase (118 aa).

Mg(2+) contacts are provided by aspartate 8 and glutamate 58.

The protein belongs to the P-Pant transferase superfamily. AcpS family. The cofactor is Mg(2+).

Its subcellular location is the cytoplasm. It carries out the reaction apo-[ACP] + CoA = holo-[ACP] + adenosine 3',5'-bisphosphate + H(+). Transfers the 4'-phosphopantetheine moiety from coenzyme A to a Ser of acyl-carrier-protein. This is Holo-[acyl-carrier-protein] synthase from Streptococcus pyogenes serotype M12 (strain MGAS2096).